Consider the following 520-residue polypeptide: MIPDVSQALSWLEAHPHALKGIRRGIERETLRVTEDGKLATTGHPEKLGAALTHHWITTDFAEALLEFITPVDDNLDHLLTFLRDIHRHVARNLGEERMWPLSMPCFIEAEQDIELAQFGSSNIGRMKTLYREGLKNRYGALMQTISGVHYNFSLPLEFWQAWAGVKDAESGKEQISAGYFRLIRNYYRFGWVIPYLFGASPAICSSFLKGRETALPFERTEQGMCYLPYATSLRLSDLGYTNKSQSNLGITFNDLQSYVEGLKRAIVTPSEEFAKLGVKDGDRHLQLNSNVLQIENELYAPIRPKRVTKSGETPSDALLRGGIEYIEVRSLDINPFSPIGVDAVQARFLDLFLIWCVLADAPEMSSDELLCTRKNWNRVILEGRKPGQTIGIGCDDSREPLAKVGKALFDDLRRVAEVLDSEAGDRQYQQVCDELVAAFDDPELTFSARILKAMKEEGTGRVGLQLAEQYRQMLIEEPLEILTETELAKEQEASWQRQRNVEASDTLSFEEFLKQHGGS.

It belongs to the glutamate--cysteine ligase type 1 family. Type 1 subfamily.

The enzyme catalyses L-cysteine + L-glutamate + ATP = gamma-L-glutamyl-L-cysteine + ADP + phosphate + H(+). The protein operates within sulfur metabolism; glutathione biosynthesis; glutathione from L-cysteine and L-glutamate: step 1/2. The chain is Glutamate--cysteine ligase from Serratia proteamaculans (strain 568).